A 341-amino-acid chain; its full sequence is Probable alcohol acetyltransferase (341 aa).

The transit peptide at 1 to 40 (MFASRILRNSAQTLKTELPHKETIKMAYDLHKPRSTAIRH) directs the protein to the mitochondrion. In terms of domain architecture, AB hydrolase-1 spans 48 to 301 (PILFLHGIFG…NSNHDILDQR (254 aa)). Residues serine 121, aspartate 145, and histidine 295 each act as charge relay system in the active site.

The protein belongs to the AB hydrolase superfamily.

It is found in the mitochondrion. Its function is as follows. Probable alcohol acetyltransferase that uses acetyl-CoA to synthesize acetate esters from various alcohols. Not involved in the synthesis of ethyl acetate. The chain is Probable alcohol acetyltransferase (EAT2) from Wickerhamomyces anomalus (strain ATCC 58044 / CBS 1984 / NCYC 433 / NRRL Y-366-8) (Yeast).